Reading from the N-terminus, the 383-residue chain is Ceramide synthase 3 (383 aa).

Residues 32–52 (VFVKASHLYITIPYAFLLMVV) form a helical membrane-spanning segment. The homeobox-like stretch occupies residues 66-127 (NALGIKKTQH…RIRQKQNKPC (62 aa)). Positions 130–331 (QKFQESCWRF…ILKMLNRCIF (202 aa)) constitute a TLC domain. The next 5 helical transmembrane spans lie at 139 to 159 (FTFYLLITMAGAVFLYDKPWA), 174 to 194 (LLPSQYWYYILEMSFYWSLVF), 205 to 225 (FLAHVIHHLAAISLMSFSWCA), 263 to 283 (LFFIFTVVFFISRFIIFPFWI), and 302 to 322 (IFLNLQLMILQGLHVYWGYFI). Residues 323 to 383 (LKMLNRCIFT…HLIANGQHGR (61 aa)) lie on the Cytoplasmic side of the membrane. Ser-340 is subject to Phosphoserine. Residues 340–383 (SDNEEEEEEEEEEEAESTKGKETEYLKNGLGTNRHLIANGQHGR) are disordered. Positions 342-354 (NEEEEEEEEEEEA) are enriched in acidic residues. Over residues 355 to 364 (ESTKGKETEY) the composition is skewed to basic and acidic residues.

In terms of tissue distribution, predominantly expressed in testis. In skin, present in the upper stratum spinosum and stratum granulosum (at protein level).

The protein localises to the endoplasmic reticulum membrane. The enzyme catalyses a very long-chain fatty acyl-CoA + a sphingoid base = an N-(very-long-chain fatty acyl)-sphingoid base + CoA + H(+). It catalyses the reaction docosanoyl-CoA + sphinganine = N-docosanoylsphinganine + CoA + H(+). The catalysed reaction is tetracosanoyl-CoA + sphinganine = N-tetracosanoylsphinganine + CoA + H(+). It carries out the reaction hexacosanoyl-CoA + sphinganine = N-hexacosanoylsphinganine + CoA + H(+). The enzyme catalyses 2-hydroxydocosanoyl-CoA + sphinganine = N-(2-hydroxydocosanoyl)-sphinganine + CoA + H(+). It catalyses the reaction 2-hydroxytetracosanoyl-CoA + sphinganine = N-(2-hydroxytetracosanoyl)-sphinganine + CoA + H(+). The catalysed reaction is an ultra-long-chain fatty acyl-CoA + a sphingoid base = an N-(ultra-long-chain-acyl)-sphingoid base + CoA + H(+). It carries out the reaction octacosanoyl-CoA + sphinganine = N-(octacosanoyl)-sphinganine + CoA + H(+). The enzyme catalyses a fatty acyl-CoA + sphing-4-enine = an N-acylsphing-4-enine + CoA + H(+). It catalyses the reaction sphinganine + octadecanoyl-CoA = N-(octadecanoyl)-sphinganine + CoA + H(+). The catalysed reaction is 2-hydroxyoctadecanoyl-CoA + sphinganine = N-(2-hydroxyoctadecanoyl)-sphinganine + CoA + H(+). Its pathway is lipid metabolism; sphingolipid metabolism. Ceramide synthase that catalyzes the transfer of the acyl chain from acyl-CoA to a sphingoid base, with high selectivity toward very- and ultra-long-chain fatty acyl-CoA (chain length greater than C22). N-acylates sphinganine and sphingosine bases to form dihydroceramides and ceramides in de novo synthesis and salvage pathways, respectively. It is crucial for the synthesis of ultra-long-chain ceramides in the epidermis, to maintain epidermal lipid homeostasis and terminal differentiation. In Mus musculus (Mouse), this protein is Ceramide synthase 3.